A 410-amino-acid polypeptide reads, in one-letter code: Peptidase T (410 aa).

Residue histidine 77 participates in Zn(2+) binding. Residue aspartate 79 is part of the active site. Aspartate 140 is a binding site for Zn(2+). The Proton acceptor role is filled by glutamate 174. Positions 175, 197, and 379 each coordinate Zn(2+).

Belongs to the peptidase M20B family. Zn(2+) serves as cofactor.

The protein resides in the cytoplasm. The enzyme catalyses Release of the N-terminal residue from a tripeptide.. Functionally, cleaves the N-terminal amino acid of tripeptides. This is Peptidase T from Desulfitobacterium hafniense (strain Y51).